Here is a 299-residue protein sequence, read N- to C-terminus: ATP phosphoribosyltransferase (299 aa).

The protein belongs to the ATP phosphoribosyltransferase family. Long subfamily. The cofactor is Mg(2+).

It is found in the cytoplasm. It carries out the reaction 1-(5-phospho-beta-D-ribosyl)-ATP + diphosphate = 5-phospho-alpha-D-ribose 1-diphosphate + ATP. Its pathway is amino-acid biosynthesis; L-histidine biosynthesis; L-histidine from 5-phospho-alpha-D-ribose 1-diphosphate: step 1/9. With respect to regulation, feedback inhibited by histidine. Catalyzes the condensation of ATP and 5-phosphoribose 1-diphosphate to form N'-(5'-phosphoribosyl)-ATP (PR-ATP). Has a crucial role in the pathway because the rate of histidine biosynthesis seems to be controlled primarily by regulation of HisG enzymatic activity. This Pasteurella multocida (strain Pm70) protein is ATP phosphoribosyltransferase (hisG).